Consider the following 583-residue polypeptide: Membrane protein insertase YidC (583 aa).

A helical membrane pass occupies residues 5–25 (SVTGLALIALIMIVWLQFMSP). A disordered region spans residues 28-50 (KSVQPDNRPKAQTTATVSQEKTE). Residues 37 to 46 (KAQTTATVSQ) are compositionally biased toward polar residues. Helical transmembrane passes span 341-361 (PFAEYVILPVFTWMNGFISNY), 362-382 (GLIIIIFALLIKLVTYPLSMA), 427-447 (LGGCLPVVLQMPLLFAMFYVF), 477-497 (IPVYGDHIAVFPILMGVTVFI), and 515-535 (LYIFPVTMLLFFNNLPAGLGL).

It belongs to the OXA1/ALB3/YidC family. Type 1 subfamily. Interacts with the Sec translocase complex via SecD. Specifically interacts with transmembrane segments of nascent integral membrane proteins during membrane integration.

The protein localises to the cell inner membrane. In terms of biological role, required for the insertion and/or proper folding and/or complex formation of integral membrane proteins into the membrane. Involved in integration of membrane proteins that insert both dependently and independently of the Sec translocase complex, as well as at least some lipoproteins. Aids folding of multispanning membrane proteins. This Chlorobium limicola (strain DSM 245 / NBRC 103803 / 6330) protein is Membrane protein insertase YidC.